Here is a 348-residue protein sequence, read N- to C-terminus: Rhodopsin (348 aa).

The Extracellular segment spans residues 1-33 (TEGPYFYVPMVNTTGIVRSPYEYPQYYLVNPAA). Asn12 is a glycosylation site (N-linked (GlcNAc...) asparagine). The helical transmembrane segment at 34–58 (FAILGAYMFFLIIVGFPVNFMTLYV) threads the bilayer. At 59–70 (TLEHKKLRTPLN) the chain is on the cytoplasmic side. Residues 71–93 (YILLNLAVADLFMVIGGFTTTMY) form a helical membrane-spanning segment. The Extracellular portion of the chain corresponds to 94–107 (TSMHGYFVLGRLGC). The cysteines at positions 107 and 184 are disulfide-linked. A helical membrane pass occupies residues 108 to 130 (NLEGFFATLGGMISLWSLAVLAI). A 'Ionic lock' involved in activated form stabilization motif is present at residues 131-133 (ERW). The Cytoplasmic portion of the chain corresponds to 131–149 (ERWVVVCKPISNFRFGENH). Residues 150 to 170 (AIMGVSLTWGMALACTVPPLV) traverse the membrane as a helical segment. At 171-199 (GWSRYIPEGMQCSCGIDYYTRAEGFNNET) the chain is on the extracellular side. N-linked (GlcNAc...) asparagine glycosylation is present at Asn197. A helical membrane pass occupies residues 200–221 (FVLYMFCCHFTVPLTIIFFCYG). Topologically, residues 222–249 (RLLCAVKEAAAAQQESETTQRAEREVTR) are cytoplasmic. The helical transmembrane segment at 250–271 (MVVIMVIGFLVCWLPYASVAWF) threads the bilayer. The Extracellular segment spans residues 272–283 (VFTHQGSEFGPL). A helical transmembrane segment spans residues 284–305 (FMTIPAFFAKSSAIYNPMIYIC). The residue at position 293 (Lys293) is an N6-(retinylidene)lysine. Residues 306–348 (MNKQFRHCMITTLFCGKNPFEGEEEGASSTKTEASSASSVSPA) lie on the Cytoplasmic side of the membrane. Residue Cys320 is the site of S-palmitoyl cysteine attachment. Residues 327–348 (GEEEGASSTKTEASSASSVSPA) form a disordered region. A compositionally biased stretch (low complexity) spans 332–348 (ASSTKTEASSASSVSPA).

It belongs to the G-protein coupled receptor 1 family. Opsin subfamily. In terms of processing, phosphorylated on some or all of the serine and threonine residues present in the C-terminal region. Contains one covalently linked retinal chromophore.

It is found in the membrane. The protein resides in the cell projection. It localises to the cilium. The protein localises to the photoreceptor outer segment. Functionally, photoreceptor required for image-forming vision at low light intensity. While most salt water fish species use retinal as chromophore, most freshwater fish use 3-dehydroretinal, or a mixture of retinal and 3-dehydroretinal. Light-induced isomerization of 11-cis to all-trans retinal triggers a conformational change that activates signaling via G-proteins. Subsequent receptor phosphorylation mediates displacement of the bound G-protein alpha subunit by arrestin and terminates signaling. The sequence is that of Rhodopsin (rho) from Sargocentron xantherythrum (Hawaiian squirrelfish).